An 895-amino-acid chain; its full sequence is Procollagen lysyl hydroxylase and glycosyltransferase (895 aa).

Residues 1-194 (MISRTYVINL…PSDEFIPIMH (194 aa)) form a lysyl hydroxylase region region. Residues 537–895 (YYFYISGDCI…KRYILVSFVN (359 aa)) are glucosyl transferase region. In terms of domain architecture, Fe2OG dioxygenase spans 805-895 (DINLAFVVKY…KRYILVSFVN (91 aa)). Positions 825, 827, and 877 each coordinate Fe cation. The active site involves Arg887.

It depends on Fe cation as a cofactor. Requires L-ascorbate as cofactor.

The catalysed reaction is L-lysyl-[collagen] + 2-oxoglutarate + O2 = (5R)-5-hydroxy-L-lysyl-[collagen] + succinate + CO2. Its function is as follows. Displays two enzymatic activities involved in procollagen processing. Forms hydroxylysine residues in -Xaa-Lys-Gly- sequences in collagens. These hydroxylysines are subsequentially glucosylated by a glucosyltransferase activity. Collagen post-translationally modified is detected in mimivirus virion. The chain is Procollagen lysyl hydroxylase and glycosyltransferase from Acanthamoeba polyphaga (Amoeba).